Consider the following 132-residue polypeptide: Small ribosomal subunit protein uS8 (132 aa).

This sequence belongs to the universal ribosomal protein uS8 family. Part of the 30S ribosomal subunit. Contacts proteins S5 and S12.

Its function is as follows. One of the primary rRNA binding proteins, it binds directly to 16S rRNA central domain where it helps coordinate assembly of the platform of the 30S subunit. This is Small ribosomal subunit protein uS8 from Streptococcus pyogenes serotype M1.